The sequence spans 510 residues: NAD(P)H-quinone oxidoreductase subunit 2 A, chloroplastic (510 aa).

Transmembrane regions (helical) follow at residues 24–44 (LLLF…GLIL), 57–77 (IPWL…ALLF), 99–119 (IFQF…VEYI), 124–144 (MAIT…MFLC), 149–169 (LITI…LSGY), 183–203 (YLLM…WLYG), 227–247 (PGIS…LSPA), 295–315 (WHLL…LIAI), 323–343 (MLAY…IVGD), 347–367 (GYAS…GTFA), 395–415 (ALSS…AGFF), 418–438 (LHLF…IGLL), and 484–504 (MIVC…IIAI).

Belongs to the complex I subunit 2 family. In terms of assembly, NDH is composed of at least 16 different subunits, 5 of which are encoded in the nucleus.

It localises to the plastid. Its subcellular location is the chloroplast thylakoid membrane. The enzyme catalyses a plastoquinone + NADH + (n+1) H(+)(in) = a plastoquinol + NAD(+) + n H(+)(out). It catalyses the reaction a plastoquinone + NADPH + (n+1) H(+)(in) = a plastoquinol + NADP(+) + n H(+)(out). Functionally, NDH shuttles electrons from NAD(P)H:plastoquinone, via FMN and iron-sulfur (Fe-S) centers, to quinones in the photosynthetic chain and possibly in a chloroplast respiratory chain. The immediate electron acceptor for the enzyme in this species is believed to be plastoquinone. Couples the redox reaction to proton translocation, and thus conserves the redox energy in a proton gradient. The sequence is that of NAD(P)H-quinone oxidoreductase subunit 2 A, chloroplastic from Platanus occidentalis (Sycamore).